The primary structure comprises 66 residues: uncharacterized protein (66 aa).

This is an uncharacterized protein from Bacillus subtilis (strain 168).